The primary structure comprises 387 residues: Na(+)/H(+) antiporter NhaA (387 aa).

The next 12 membrane-spanning stretches (helical) occupy residues 16-36, 53-73, 89-109, 118-138, 147-167, 171-191, 197-217, 220-240, 251-271, 283-303, 321-341, and 354-374; these read AGGV…NSSI, IEHY…GLEL, LLPI…HMFF, GSGI…SLLG, VFLT…IAIF, GIDV…FILN, ILWP…HSGV, TITG…PDSI, PVAF…IIDS, IGIF…FCAI, VIGV…ITLL, and IAIM…LKMT.

It belongs to the NhaA Na(+)/H(+) (TC 2.A.33) antiporter family.

It is found in the cell inner membrane. The enzyme catalyses Na(+)(in) + 2 H(+)(out) = Na(+)(out) + 2 H(+)(in). In terms of biological role, na(+)/H(+) antiporter that extrudes sodium in exchange for external protons. In Cytophaga hutchinsonii (strain ATCC 33406 / DSM 1761 / CIP 103989 / NBRC 15051 / NCIMB 9469 / D465), this protein is Na(+)/H(+) antiporter NhaA.